Consider the following 602-residue polypeptide: Elongation factor 4 (602 aa).

The region spanning 8 to 189 (KNIRNFSIIA…KIITTIPAPS (182 aa)) is the tr-type G domain. GTP is bound by residues 20–25 (DHGKST) and 136–139 (NKID).

Belongs to the TRAFAC class translation factor GTPase superfamily. Classic translation factor GTPase family. LepA subfamily.

The protein localises to the cell inner membrane. The enzyme catalyses GTP + H2O = GDP + phosphate + H(+). In terms of biological role, required for accurate and efficient protein synthesis under certain stress conditions. May act as a fidelity factor of the translation reaction, by catalyzing a one-codon backward translocation of tRNAs on improperly translocated ribosomes. Back-translocation proceeds from a post-translocation (POST) complex to a pre-translocation (PRE) complex, thus giving elongation factor G a second chance to translocate the tRNAs correctly. Binds to ribosomes in a GTP-dependent manner. This chain is Elongation factor 4, found in Helicobacter pylori (strain Shi470).